Consider the following 409-residue polypeptide: Argininosuccinate synthase (409 aa).

Residues 10 to 18 (AYSGGLDTS) and Ala37 each bind ATP. Residues Tyr90 and Ser95 each contribute to the L-citrulline site. Gly120 provides a ligand contact to ATP. Thr122, Asn126, and Asp127 together coordinate L-aspartate. Asn126 is an L-citrulline binding site. Residues Arg130, Ser182, Ser191, Glu267, and Tyr279 each coordinate L-citrulline.

It belongs to the argininosuccinate synthase family. Type 1 subfamily. Homotetramer.

Its subcellular location is the cytoplasm. The enzyme catalyses L-citrulline + L-aspartate + ATP = 2-(N(omega)-L-arginino)succinate + AMP + diphosphate + H(+). It participates in amino-acid biosynthesis; L-arginine biosynthesis; L-arginine from L-ornithine and carbamoyl phosphate: step 2/3. This chain is Argininosuccinate synthase, found in Thiobacillus denitrificans (strain ATCC 25259 / T1).